Consider the following 237-residue polypeptide: Demethylmenaquinone methyltransferase (237 aa).

Residues T58, D79, and 107–108 (NA) each bind S-adenosyl-L-methionine.

The protein belongs to the class I-like SAM-binding methyltransferase superfamily. MenG/UbiE family.

It catalyses the reaction a 2-demethylmenaquinol + S-adenosyl-L-methionine = a menaquinol + S-adenosyl-L-homocysteine + H(+). Its pathway is quinol/quinone metabolism; menaquinone biosynthesis; menaquinol from 1,4-dihydroxy-2-naphthoate: step 2/2. Functionally, methyltransferase required for the conversion of demethylmenaquinol (DMKH2) to menaquinol (MKH2). The sequence is that of Demethylmenaquinone methyltransferase from Lactiplantibacillus plantarum (strain ATCC BAA-793 / NCIMB 8826 / WCFS1) (Lactobacillus plantarum).